A 411-amino-acid polypeptide reads, in one-letter code: Exodeoxyribonuclease 7 large subunit (411 aa).

Belongs to the XseA family. In terms of assembly, heterooligomer composed of large and small subunits.

Its subcellular location is the cytoplasm. It carries out the reaction Exonucleolytic cleavage in either 5'- to 3'- or 3'- to 5'-direction to yield nucleoside 5'-phosphates.. In terms of biological role, bidirectionally degrades single-stranded DNA into large acid-insoluble oligonucleotides, which are then degraded further into small acid-soluble oligonucleotides. The polypeptide is Exodeoxyribonuclease 7 large subunit (Mycobacterium sp. (strain JLS)).